The primary structure comprises 198 residues: Holliday junction branch migration complex subunit RuvA (198 aa).

A domain I region spans residues 1-63 (MYDYIKGQLT…EDAHLLFGFH (63 aa)). The tract at residues 64 to 142 (TKDEKDVFLK…EAPQETGNTK (79 aa)) is domain II. The segment at 143 to 147 (ARSNK) is flexible linker. Residues 148-198 (AGNTQLDEAIEALLALGYKATELKKIRAFFEGTSETAEQYIKSALKLLMKG) form a domain III region.

This sequence belongs to the RuvA family. As to quaternary structure, homotetramer. Forms an RuvA(8)-RuvB(12)-Holliday junction (HJ) complex. HJ DNA is sandwiched between 2 RuvA tetramers; dsDNA enters through RuvA and exits via RuvB. An RuvB hexamer assembles on each DNA strand where it exits the tetramer. Each RuvB hexamer is contacted by two RuvA subunits (via domain III) on 2 adjacent RuvB subunits; this complex drives branch migration. In the full resolvosome a probable DNA-RuvA(4)-RuvB(12)-RuvC(2) complex forms which resolves the HJ.

The protein resides in the cytoplasm. In terms of biological role, the RuvA-RuvB-RuvC complex processes Holliday junction (HJ) DNA during genetic recombination and DNA repair, while the RuvA-RuvB complex plays an important role in the rescue of blocked DNA replication forks via replication fork reversal (RFR). RuvA specifically binds to HJ cruciform DNA, conferring on it an open structure. The RuvB hexamer acts as an ATP-dependent pump, pulling dsDNA into and through the RuvAB complex. HJ branch migration allows RuvC to scan DNA until it finds its consensus sequence, where it cleaves and resolves the cruciform DNA. This chain is Holliday junction branch migration complex subunit RuvA, found in Streptococcus pyogenes serotype M18 (strain MGAS8232).